A 286-amino-acid polypeptide reads, in one-letter code: ATP synthase gamma chain (286 aa).

The protein belongs to the ATPase gamma chain family. F-type ATPases have 2 components, CF(1) - the catalytic core - and CF(0) - the membrane proton channel. CF(1) has five subunits: alpha(3), beta(3), gamma(1), delta(1), epsilon(1). CF(0) has three main subunits: a, b and c.

The protein resides in the cell membrane. Its function is as follows. Produces ATP from ADP in the presence of a proton gradient across the membrane. The gamma chain is believed to be important in regulating ATPase activity and the flow of protons through the CF(0) complex. The chain is ATP synthase gamma chain from Mycoplasma mobile (strain ATCC 43663 / 163K / NCTC 11711) (Mesomycoplasma mobile).